A 326-amino-acid chain; its full sequence is tRNA U34 carboxymethyltransferase (326 aa).

Residues lysine 91, tryptophan 105, lysine 110, glycine 130, methionine 196, tyrosine 200, and arginine 315 each coordinate carboxy-S-adenosyl-L-methionine.

The protein belongs to the class I-like SAM-binding methyltransferase superfamily. CmoB family. Homotetramer.

It catalyses the reaction carboxy-S-adenosyl-L-methionine + 5-hydroxyuridine(34) in tRNA = 5-carboxymethoxyuridine(34) in tRNA + S-adenosyl-L-homocysteine + H(+). Its function is as follows. Catalyzes carboxymethyl transfer from carboxy-S-adenosyl-L-methionine (Cx-SAM) to 5-hydroxyuridine (ho5U) to form 5-carboxymethoxyuridine (cmo5U) at position 34 in tRNAs. The chain is tRNA U34 carboxymethyltransferase from Tolumonas auensis (strain DSM 9187 / NBRC 110442 / TA 4).